Consider the following 152-residue polypeptide: Transcriptional regulator MraZ (152 aa).

2 SpoVT-AbrB domains span residues 5-52 (ASAI…PLDE) and 81-124 (AHEC…DETA).

It belongs to the MraZ family. As to quaternary structure, forms oligomers.

The protein localises to the cytoplasm. It localises to the nucleoid. This is Transcriptional regulator MraZ from Shewanella woodyi (strain ATCC 51908 / MS32).